The sequence spans 274 residues: Carboxy-S-adenosyl-L-methionine synthase (274 aa).

S-adenosyl-L-methionine is bound by residues tyrosine 59, 93–95, 149–150, asparagine 164, and arginine 231; these read GCS and DI.

Belongs to the class I-like SAM-binding methyltransferase superfamily. Cx-SAM synthase family. Homodimer.

It catalyses the reaction prephenate + S-adenosyl-L-methionine = carboxy-S-adenosyl-L-methionine + 3-phenylpyruvate + H2O. Its function is as follows. Catalyzes the conversion of S-adenosyl-L-methionine (SAM) to carboxy-S-adenosyl-L-methionine (Cx-SAM). This is Carboxy-S-adenosyl-L-methionine synthase from Psychrobacter sp. (strain PRwf-1).